The primary structure comprises 234 residues: Preprocaerulein type-4 (234 aa).

The N-terminal stretch at 1 to 26 is a signal peptide; sequence MFKGILLCVLFAVLSANPLSQPEGFA. Positions 27–73 are excised as a propeptide; sequence DEEERDVRGLASLLGKALKAALKIGANALGGSPQQREANDERRFADG. The residue at position 77 (tyrosine 77) is a Sulfotyrosine. Position 83 is a phenylalanine amide (phenylalanine 83). Positions 87–137 are excised as a propeptide; sequence DDEDDVNERDVRGFGSFLGKALKAGLKIGTHFLGGAPQQREANDERRFADG. Tyrosine 141 carries the sulfotyrosine modification. Phenylalanine 147 bears the Phenylalanine amide mark. Residues 151–152 constitute a propeptide that is removed on maturation; the sequence is DG. The residue at position 156 (tyrosine 156) is a Sulfotyrosine. Phenylalanine 162 bears the Phenylalanine amide mark. A propeptide spanning residues 166–216 is cleaved from the precursor; sequence DDEDDVHERDVRGFGSFLGKALKAALKIGANALGGSPQQREANDERRFADG. Positions 198–234 are disordered; it reads LGGSPQQREANDERRFADGQQDYTGWMDFGRRNGEDD. Tyrosine 220 carries the sulfotyrosine modification. Position 226 is a phenylalanine amide (phenylalanine 226). Residues 230 to 234 constitute a propeptide that is removed on maturation; it reads NGEDD.

The protein belongs to the gastrin/cholecystokinin family. In terms of tissue distribution, expressed by the skin glands.

The protein localises to the secreted. Functionally, the pharmacological activities of caerulein are quite similar to the physiological activities of gastrin and related peptides. This Xenopus borealis (Kenyan clawed frog) protein is Preprocaerulein type-4.